Here is a 620-residue protein sequence, read N- to C-terminus: Glutathione-regulated potassium-efflux system protein KefC (620 aa).

12 helical membrane-spanning segments follow: residues 4 to 24, 26 to 46, 54 to 74, 90 to 110, 114 to 134, 149 to 169, 178 to 198, 218 to 238, 270 to 290, 294 to 314, 327 to 347, and 359 to 379; these read HTLL…PIAV, LGLG…PWGL, SILH…GLEL, GALQ…FLGL, VAEL…MQAM, FAVL…IPLL, LGAF…VVLL, VFSA…EEVG, GLLL…GTLV, LRIL…LWLV, WFAV…GAAQ, and ALTL…VLLT. The 120-residue stretch at 399 to 518 folds into the RCK N-terminal domain; that stretch reads QPRVIVAGFG…AGVAMPERET (120 aa). Positions 599–620 are disordered; it reads QGTAEGKHSGEAADEPEVKPSI.

This sequence belongs to the monovalent cation:proton antiporter 2 (CPA2) transporter (TC 2.A.37) family. KefC subfamily. Homodimer. Interacts with the regulatory subunit KefF.

Its subcellular location is the cell inner membrane. Its function is as follows. Pore-forming subunit of a potassium efflux system that confers protection against electrophiles. Catalyzes K(+)/H(+) antiport. The polypeptide is Glutathione-regulated potassium-efflux system protein KefC (Salmonella schwarzengrund (strain CVM19633)).